We begin with the raw amino-acid sequence, 398 residues long: tRNA-specific 2-thiouridylase MnmA (398 aa).

ATP contacts are provided by residues 19 to 26 and Leu-45; that span reads AMSGGVDS. Residue Cys-113 is the Nucleophile of the active site. A disulfide bond links Cys-113 and Cys-210. Position 137 (Gly-137) interacts with ATP. Positions 160–162 are interaction with tRNA; sequence RDQ. Residue Cys-210 is the Cysteine persulfide intermediate of the active site.

It belongs to the MnmA/TRMU family.

The protein resides in the cytoplasm. The catalysed reaction is S-sulfanyl-L-cysteinyl-[protein] + uridine(34) in tRNA + AH2 + ATP = 2-thiouridine(34) in tRNA + L-cysteinyl-[protein] + A + AMP + diphosphate + H(+). In terms of biological role, catalyzes the 2-thiolation of uridine at the wobble position (U34) of tRNA, leading to the formation of s(2)U34. The protein is tRNA-specific 2-thiouridylase MnmA of Rhodopseudomonas palustris (strain BisB5).